The primary structure comprises 209 residues: Uracil phosphoribosyltransferase (209 aa).

Residues Arg79, Arg104, and 131-139 (DPMLATGGS) each bind 5-phospho-alpha-D-ribose 1-diphosphate. Uracil-binding positions include Val194 and 199-201 (GDA). Asp200 is a binding site for 5-phospho-alpha-D-ribose 1-diphosphate.

The protein belongs to the UPRTase family. Mg(2+) is required as a cofactor.

The enzyme catalyses UMP + diphosphate = 5-phospho-alpha-D-ribose 1-diphosphate + uracil. It participates in pyrimidine metabolism; UMP biosynthesis via salvage pathway; UMP from uracil: step 1/1. Its activity is regulated as follows. Allosterically activated by GTP. Its function is as follows. Catalyzes the conversion of uracil and 5-phospho-alpha-D-ribose 1-diphosphate (PRPP) to UMP and diphosphate. The protein is Uracil phosphoribosyltransferase of Bacillus mycoides (strain KBAB4) (Bacillus weihenstephanensis).